Reading from the N-terminus, the 495-residue chain is Glycerol kinase (495 aa).

Position 14 (threonine 14) interacts with ADP. 3 residues coordinate ATP: threonine 14, threonine 15, and serine 16. Threonine 14 contributes to the sn-glycerol 3-phosphate binding site. An ADP-binding site is contributed by arginine 18. Arginine 84, glutamate 85, tyrosine 136, and aspartate 246 together coordinate sn-glycerol 3-phosphate. Residues arginine 84, glutamate 85, tyrosine 136, aspartate 246, and glutamine 247 each contribute to the glycerol site. Positions 268 and 312 each coordinate ADP. Residues threonine 268, glycine 312, glutamine 316, and glycine 413 each contribute to the ATP site. ADP is bound by residues glycine 413 and asparagine 417.

Belongs to the FGGY kinase family.

It catalyses the reaction glycerol + ATP = sn-glycerol 3-phosphate + ADP + H(+). It functions in the pathway polyol metabolism; glycerol degradation via glycerol kinase pathway; sn-glycerol 3-phosphate from glycerol: step 1/1. With respect to regulation, inhibited by fructose 1,6-bisphosphate (FBP). In terms of biological role, key enzyme in the regulation of glycerol uptake and metabolism. Catalyzes the phosphorylation of glycerol to yield sn-glycerol 3-phosphate. This is Glycerol kinase from Bdellovibrio bacteriovorus (strain ATCC 15356 / DSM 50701 / NCIMB 9529 / HD100).